A 744-amino-acid chain; its full sequence is Zinc finger protein 483 (744 aa).

The region spanning 52-134 (RQRFRWFCYS…TLIEDLTQML (83 aa)) is the SCAN box domain. The interval 137–156 (KDPVSQDSTVSQEENSKEDK) is disordered. Residues 170–241 (ITLKDVAVNF…EEVSKSSRLD (72 aa)) enclose the KRAB domain. Disordered stretches follow at residues 263–308 (ESQQ…SPFG) and 350–385 (KEKT…KIHL). A compositionally biased stretch (polar residues) spans 277–293 (NQGNSKGRVAQNKTLGS). 2 stretches are compositionally biased toward basic and acidic residues: residues 298–308 (KKFDPDKSPFG) and 350–363 (KEKT…KSND). 11 C2H2-type zinc fingers span residues 439-461 (HKCS…RRIH), 467-489 (YMCN…HRTH), 495-517 (FKCD…QRIH), 523-545 (YKCK…QRIH), 551-573 (YTCS…QRIH), 579-601 (YKCG…QRIH), 607-629 (YLCN…QRLH), 635-657 (YKCN…QRIH), 663-685 (YKCK…HRIH), 691-713 (YECN…LKIH), and 719-741 (YECN…RGFH).

This sequence belongs to the krueppel C2H2-type zinc-finger protein family.

Its subcellular location is the nucleus. May be involved in transcriptional regulation. The chain is Zinc finger protein 483 (ZNF483) from Homo sapiens (Human).